A 238-amino-acid polypeptide reads, in one-letter code: MRPAGRSANQVRPVTLTRNYTKHAEGSVLVEFGDTKVLCTASIEEGVPRFLKGQGQGWITAEYGMLPRATHTRNAREAAKGKQGGRTMEIQRLIARALRAAVDLKTLGEFTITLDCDVVQADGGTRTASITGACVALADALNKLVANGKLKTNPMKGMVAAVSVGIVNGEAICDLEYVEDSAAETDMNVVMTEDGRIIEVQGTAEGEPFSHEELLTLLALARGGIESIVATQKAALEN.

Residues Arg86 and 124–126 (GTR) each bind phosphate.

This sequence belongs to the RNase PH family. In terms of assembly, homohexameric ring arranged as a trimer of dimers.

It catalyses the reaction tRNA(n+1) + phosphate = tRNA(n) + a ribonucleoside 5'-diphosphate. In terms of biological role, phosphorolytic 3'-5' exoribonuclease that plays an important role in tRNA 3'-end maturation. Removes nucleotide residues following the 3'-CCA terminus of tRNAs; can also add nucleotides to the ends of RNA molecules by using nucleoside diphosphates as substrates, but this may not be physiologically important. Probably plays a role in initiation of 16S rRNA degradation (leading to ribosome degradation) during starvation. This chain is Ribonuclease PH, found in Salmonella choleraesuis (strain SC-B67).